The sequence spans 60 residues: MSSDCGNCDCADKSQCTKKGFQIDGIVETSYEMGHGGDVSLENDCKCGPNCQCGTCTCHT.

It belongs to the metallothionein superfamily. Type 15 family.

Metallothioneins have a high content of cysteine residues that bind various heavy metals. In Picea glauca (White spruce), this protein is Metallothionein-like protein EMB30 (EMB30).